The sequence spans 253 residues: Endonuclease NucS (253 aa).

The protein belongs to the NucS endonuclease family.

The protein localises to the cytoplasm. In terms of biological role, cleaves both 3' and 5' ssDNA extremities of branched DNA structures. The polypeptide is Endonuclease NucS (Pyrococcus horikoshii (strain ATCC 700860 / DSM 12428 / JCM 9974 / NBRC 100139 / OT-3)).